The primary structure comprises 840 residues: N-acetyltransferase ESCO1 (840 aa).

Residues 1–25 (MMSIQEKSKENSSKVTKKSDDKNSE) show a composition bias toward basic and acidic residues. The segment at 1–188 (MMSIQEKSKE…VLEVKSDSKE (188 aa)) is disordered. Polar residues-rich tracts occupy residues 46–58 (KSQA…SKIN), 65–74 (RMSTRSSKAA), and 81–96 (KSIN…YSQE). A compositionally biased stretch (basic and acidic residues) spans 131 to 140 (VSRRSLRSRE). Positions 141 to 153 (IQGQVQAVKQSLP) are enriched in polar residues. The span at 161-170 (SSTQSKSNKT) shows a compositional bias: low complexity. Positions 178 to 188 (KVLEVKSDSKE) are enriched in basic and acidic residues. Position 200 is a phosphoserine (S200). Disordered regions lie at residues 221 to 300 (TQGS…KSKR) and 318 to 338 (NVEV…KPTE). The segment covering 267-278 (HTQVNTNTTLPK) has biased composition (polar residues). Basic and acidic residues predominate over residues 319-338 (VEVKKESSQMESVKEEKPTE). K332 is covalently cross-linked (Glycyl lysine isopeptide (Lys-Gly) (interchain with G-Cter in SUMO2)). A Phosphoserine modification is found at S412. 2 disordered regions span residues 486–505 (ANEI…HSFD) and 542–582 (TGEN…KCNS). Residues 551-565 (APQQHSILSNQTSKS) show a composition bias toward polar residues. The CCHH-type zinc-finger motif lies at 617 to 641 (VSCNVCGMLYTASNPEDETQHLLFH). Acetyl-CoA contacts are provided by residues 772 to 774 (IWV), 780 to 785 (RKKIAS), and 812 to 814 (TPD).

Belongs to the acetyltransferase family. ECO subfamily. The subunit structure is controversial. Monomer. Homodimer. In terms of processing, phosphorylated during mitosis, when associated with chromosomes. In terms of tissue distribution, widely expressed. Expressed in heart, brain, liver, placenta, lung, kidney and pancreas. Highly expressed in muscle.

It is found in the nucleus. The protein resides in the chromosome. The enzyme catalyses L-lysyl-[protein] + acetyl-CoA = N(6)-acetyl-L-lysyl-[protein] + CoA + H(+). Its function is as follows. Acetyltransferase required for the establishment of sister chromatid cohesion. Couples the processes of cohesion and DNA replication to ensure that only sister chromatids become paired together. In contrast to the structural cohesins, the deposition and establishment factors are required only during S phase. Acts by mediating the acetylation of cohesin component SMC3. This is N-acetyltransferase ESCO1 (ESCO1) from Homo sapiens (Human).